Reading from the N-terminus, the 412-residue chain is Indian hedgehog B protein (412 aa).

Positions 1–23 are cleaved as a signal peptide; it reads MRLSTAAALLTGFILAFSPAYDG. A lipid anchor (N-palmitoyl cysteine) is attached at cysteine 24. Positions 89, 90, 95, 125, 126, 129, and 131 each coordinate Ca(2+). Zn(2+) contacts are provided by histidine 140, aspartate 147, and histidine 182. Glycine 197 is lipidated: Cholesterol glycine ester.

Belongs to the hedgehog family. In terms of assembly, multimer. As to quaternary structure, interacts with BOC and CDON. Interacts with PTCH1. Interacts with glypican GPC3. In terms of processing, cholesterylation is required for N-product targeting to lipid rafts and multimerization. Post-translationally, the C-terminal domain displays an autoproteolysis activity and a cholesterol transferase activity. Both activities result in the cleavage of the full-length protein and covalent attachment of a cholesterol moiety to the C-terminal of the newly generated N-product. The N-product is the active species in both local and long-range signaling, whereas the C-product is degraded in the endoplasmic reticulum. N-palmitoylation by HHAT of N-product is required for indian hedgehog protein N-product multimerization and full activity. Expressed exclusively in the notochord.

The protein resides in the cell membrane. It localises to the endoplasmic reticulum membrane. It is found in the golgi apparatus membrane. The protein localises to the secreted. The enzyme catalyses glycyl-L-cysteinyl-[protein] + cholesterol + H(+) = [protein]-C-terminal glycyl cholesterol ester + N-terminal L-cysteinyl-[protein]. In terms of biological role, signal involved in the early induction and patterning of anterodorsal ectoderm, nervous system and somites. It is involved in the regulation of endochondral skeleton formation, and the development of retinal pigment epithelium (RPE), photoreceptors and periocular tissues. The C-terminal part of the indian hedgehog protein precursor displays an autoproteolysis and a cholesterol transferase activity. Both activities result in the cleavage of the full-length protein into two parts followed by the covalent attachment of a cholesterol moiety to the C-terminal of the newly generated N-product. Both activities occur in the endoplasmic reticulum. Functionally, the dually lipidated indian hedgehog protein N-product is a morphogen which is essential for a variety of patterning events during development. Binds to the patched (PTCH1) receptor, which functions in association with smoothened (SMO), to activate the transcription of target genes. In the notochord, induces somite patterning and muscle pioneer differentiation. In Danio rerio (Zebrafish), this protein is Indian hedgehog B protein (ihhb).